We begin with the raw amino-acid sequence, 1051 residues long: MQETFKFLRCNSQGEAVEDKYSLETLKNHFVVRDEYNNLFRVFSSRDDFWEWEAAQPFEQKCFHEVVFGFLPQRLKFDIDFPVNKSYSNDNVDENVDDIVNDDDNVYDILDMIINVIMDVFYETYSLPYNINLTREQILLTDSIGLNKKRELKYSFHIILYTHSVLNNNEAKVFTSKVLENLPKHVYPFVDPQVNKSIQNFRIIGSHKKGSMRVKMFNEELADVFETSTTTKKSDTLIATPFETTCLPCIFTNVKETTPSSCDTIQQSELEEVLKFAGTLCKNHCFLRVHKNLVLFKRTSPSYCEICKRMHDKDNTLILRVTGNKVYQHCRHDNKHSLLMGSLSGTNNFVETYVDQVMTKSIEVHESILFEELPDPQKHIYDESSMREYERVPTLVVKAQMKIGKTIQLRNYLQKYYGNNSISKQQTIRFVTFRQIFSKNIQSRLPNFTLYSEVTGDLDSYERVIIQVESLFRLTSTAEPVDLLILDEVESIFNQFNSGLHKYFAPSFAIFMWMLETANYVICLDANLGNRTYNILQRFRGDVPIFFHWNQYKRAQHDMYYFTSSRETWLNNLLKDLLEDKKIVIPTNSLMEARLLQSFIQKKFPEKKIGFYSSKSTAHERESHFNNVSYYWGLVDILIYTPTISAGVSYEDKRFDVLYGFFNNMSCDVETCCQMLGRVRELKSKCYKICLQGKQNYFPETIEDIEMFTLQKRDTLFQTISNHQLSFTYNKETGRPIYYKTPYYHLWLETMRIQHLSKNHFITRFINQIADTGAKVFILTGEKLETVKQYTSIKMEIKHQDYVNIASAETIDANKALLIKQNLKEGITVDQQDLFAYEKYKLLEFYAWHGHKITPKFVEQYNSFMTKQNYTGRVQISRGKTVYESLTMLQTQELNFHQWAMQHAEHHDLQYNYSFQSHMYAIMLLTKCGFKCVQDPNILTNEQLMAKLVDEFVQYDLSAVSFEFKLKKPNKTDPQTILKFINKVLGLRYGLKIHHNKGNYYIKNTKAGSLIPFVRQQIKQSPCVVSNLLPITETSSVKEETSPIKETFTET.

This sequence belongs to the asfivirus F1055L family.

Functionally, may be involved in DNA replication. The polypeptide is Putative helicase/primase complex protein (Ornithodoros (relapsing fever ticks)).